Consider the following 31-residue polypeptide: Cytochrome b6-f complex subunit 6 (31 aa).

Residues Ile-4 to Ser-26 form a helical membrane-spanning segment.

This sequence belongs to the PetL family. The 4 large subunits of the cytochrome b6-f complex are cytochrome b6, subunit IV (17 kDa polypeptide, PetD), cytochrome f and the Rieske protein, while the 4 small subunits are PetG, PetL, PetM and PetN. The complex functions as a dimer.

Its subcellular location is the plastid. The protein resides in the chloroplast thylakoid membrane. Functionally, component of the cytochrome b6-f complex, which mediates electron transfer between photosystem II (PSII) and photosystem I (PSI), cyclic electron flow around PSI, and state transitions. PetL is important for photoautotrophic growth as well as for electron transfer efficiency and stability of the cytochrome b6-f complex. This is Cytochrome b6-f complex subunit 6 from Nymphaea alba (White water-lily).